The primary structure comprises 180 residues: Transcription repressor NadR (180 aa).

In terms of assembly, homodimer.

Its function is as follows. In the presence of nicotinic acid represses transcription of the nadBCA and nifS-nadR operons. Also binds to DNA upstream of the niaP gene, probably regulating it as well. May bind nicotinic acid. This chain is Transcription repressor NadR (nadR), found in Bacillus subtilis (strain 168).